A 552-amino-acid polypeptide reads, in one-letter code: Steroid transmembrane transporter SLC22A24 (552 aa).

12 consecutive transmembrane segments (helical) span residues F16–L36, S146–L166, M174–P194, F204–W224, T235–I255, T260–V280, I349–F369, L380–M400, I407–D427, I436–F456, I473–S493, and Y495–L515.

The protein belongs to the major facilitator (TC 2.A.1) superfamily. Organic cation transporter (TC 2.A.1.19) family.

It is found in the cell membrane. The catalysed reaction is estrone 3-sulfate(out) + glutarate(in) = estrone 3-sulfate(in) + glutarate(out). It catalyses the reaction 17beta-estradiol 17-O-(beta-D-glucuronate)(out) + glutarate(in) = 17beta-estradiol 17-O-(beta-D-glucuronate)(in) + glutarate(out). It carries out the reaction 5alpha-androstane-3alpha,17beta-diol 3-O-(beta-D-glucuronate)(out) + glutarate(in) = 5alpha-androstane-3alpha,17beta-diol 3-O-(beta-D-glucuronate)(in) + glutarate(out). The enzyme catalyses dehydroepiandrosterone 3-sulfate(out) + glutarate(in) = dehydroepiandrosterone 3-sulfate(in) + glutarate(out). The catalysed reaction is glutarate(in) + succinate(out) = glutarate(out) + succinate(in). Functionally, renal transmembrane organic anion/dicarboxylate exchanger that participates in the reabsorption of conjugated steroids, as well as bile acids, driven by an outward gradient of dicarboxylates such as glutarate or succinate. Transports androstanediol glucuronide (5alpha-androstane-3alpha,17beta-diol 3-O-(beta-D-glucuronate)), estrone 3-sulfate, and estradiol-17-glucuronide (17beta-estradiol 17-O-(beta-D-glucuronate)), but not taurocholate. The sequence is that of Steroid transmembrane transporter SLC22A24 from Microcebus murinus (Gray mouse lemur).